The primary structure comprises 171 residues: Ribulose bisphosphate carboxylase small subunit, chloroplastic (171 aa).

The transit peptide at Met1–Arg50 directs the protein to the chloroplast.

The protein belongs to the RuBisCO small chain family. As to quaternary structure, heterohexadecamer of 8 large and 8 small subunits.

It localises to the plastid. The protein localises to the chloroplast. Its function is as follows. RuBisCO catalyzes two reactions: the carboxylation of D-ribulose 1,5-bisphosphate, the primary event in carbon dioxide fixation, as well as the oxidative fragmentation of the pentose substrate. Both reactions occur simultaneously and in competition at the same active site. Although the small subunit is not catalytic it is essential for maximal activity. This is Ribulose bisphosphate carboxylase small subunit, chloroplastic from Pinus thunbergii (Japanese black pine).